The chain runs to 279 residues: NAD kinase (279 aa).

The Proton acceptor role is filled by D57. NAD(+) contacts are provided by residues 57 to 58 (DG), 133 to 134 (NE), R159, D161, and 172 to 177 (TAYNKS).

The protein belongs to the NAD kinase family. The cofactor is a divalent metal cation.

It localises to the cytoplasm. The enzyme catalyses NAD(+) + ATP = ADP + NADP(+) + H(+). Functionally, involved in the regulation of the intracellular balance of NAD and NADP, and is a key enzyme in the biosynthesis of NADP. Catalyzes specifically the phosphorylation on 2'-hydroxyl of the adenosine moiety of NAD to yield NADP. The polypeptide is NAD kinase (Streptococcus pyogenes serotype M12 (strain MGAS2096)).